The chain runs to 304 residues: Probable 5-dehydro-4-deoxyglucarate dehydratase (304 aa).

The protein belongs to the DapA family.

It catalyses the reaction 5-dehydro-4-deoxy-D-glucarate + H(+) = 2,5-dioxopentanoate + CO2 + H2O. It participates in carbohydrate acid metabolism; D-glucarate degradation; 2,5-dioxopentanoate from D-glucarate: step 2/2. The protein is Probable 5-dehydro-4-deoxyglucarate dehydratase of Pseudarthrobacter chlorophenolicus (strain ATCC 700700 / DSM 12829 / CIP 107037 / JCM 12360 / KCTC 9906 / NCIMB 13794 / A6) (Arthrobacter chlorophenolicus).